A 267-amino-acid chain; its full sequence is MKFISFNINGLRARPHQLEAIIEKYQPDVIGLQEIKVADEAFPYEITENLGYHVFHHGQKGHYGVALLTKQEPKVIRRGFPTDNEDAQKRIIMADLETEFGLLTVINGYFPQGESRAHETKFPAKEKFYADLQQYLEKEHDKSNPILIMGDMNISPSDLDIGIGDENRKRWLRTGKCSFLPEERAWYQRLYDYGLEDSFRKLNPTANDKFSWFDYRSKGFDDNRGLRIDHILVSQKLAERCVDVGIALDIRAMEKPSDHAPIWAEFK.

Glu34 contacts Mg(2+). Residue Tyr109 is part of the active site. Mg(2+) contacts are provided by Asp151, Asn153, and Asp258. Asp151 (proton donor/acceptor) is an active-site residue.

It belongs to the DNA repair enzymes AP/ExoA family. Monomer. Mg(2+) serves as cofactor. It depends on Mn(2+) as a cofactor.

It catalyses the reaction Exonucleolytic cleavage in the 3'- to 5'-direction to yield nucleoside 5'-phosphates.. In terms of biological role, major apurinic-apyrimidinic endonuclease of E.coli. It removes the damaged DNA at cytosines and guanines by cleaving on the 3'-side of the AP site by a beta-elimination reaction. The polypeptide is Exodeoxyribonuclease III (xthA) (Haemophilus influenzae (strain ATCC 51907 / DSM 11121 / KW20 / Rd)).